Consider the following 196-residue polypeptide: 3-isopropylmalate dehydratase small subunit (196 aa).

Belongs to the LeuD family. LeuD type 1 subfamily. In terms of assembly, heterodimer of LeuC and LeuD.

It catalyses the reaction (2R,3S)-3-isopropylmalate = (2S)-2-isopropylmalate. Its pathway is amino-acid biosynthesis; L-leucine biosynthesis; L-leucine from 3-methyl-2-oxobutanoate: step 2/4. Catalyzes the isomerization between 2-isopropylmalate and 3-isopropylmalate, via the formation of 2-isopropylmaleate. In Streptococcus gordonii (strain Challis / ATCC 35105 / BCRC 15272 / CH1 / DL1 / V288), this protein is 3-isopropylmalate dehydratase small subunit.